A 296-amino-acid polypeptide reads, in one-letter code: Thioredoxin-related transmembrane protein 2 (296 aa).

An N-terminal signal peptide occupies residues 1-48 (MAVLAPLIALVYSVPRLSRWLARPYYFLSALLSAAFLLVRKLPPVCES). Over 49-102 (LPTQREDGNPCDFDWREVEILMFLSAIVMMKNRRSITVEQHVGNIFMFSKVANA) the chain is Extracellular. The chain crosses the membrane as a helical span at residues 103–125 (ILFFRLDIRMGLLYITLCIVFLM). The Cytoplasmic segment spans residues 126–296 (TCKPPLYMGP…VPDEESKKDK (171 aa)). Residues 132–269 (YMGPEYIKYF…LYQRAKKLSK (138 aa)) form the Thioredoxin domain. Phosphoserine is present on residues Ser-211 and Ser-243. Residues 272–296 (DKIPEEQPVAAVPAAVPDEESKKDK) form a disordered region. The span at 277 to 287 (EQPVAAVPAAV) shows a compositional bias: low complexity. Residues 293 to 296 (KKDK) carry the Di-lysine motif motif.

Monomer. Homodimer; disulfide-linked. Occurs in both reduced and oxidized monomeric form. Oxidative conditions increase homodimerization. Interacts with CANX. Interacts with ATP2A2.

It localises to the endoplasmic reticulum membrane. The protein resides in the mitochondrion membrane. Its function is as follows. Endoplasmic reticulum and mitochondria-associated protein that probably functions as a regulator of cellular redox state and thereby regulates protein post-translational modification, protein folding and mitochondrial activity. Indirectly regulates neuronal proliferation, migration, and organization in the developing brain. This is Thioredoxin-related transmembrane protein 2 (TMX2) from Bos taurus (Bovine).